The primary structure comprises 2225 residues: Multifunctional protein pyr1-3 (2225 aa).

Methionine 1 carries the N-acetylmethionine modification. A GATase (Glutamine amidotransferase) region spans residues 40–390 (MVGYNESISD…NVCGEQQHKS (351 aa)). L-glutamine-binding residues include serine 51, glycine 245, and glycine 247. In terms of domain architecture, Glutamine amidotransferase type-1 spans 196–388 (KVIVLDCGIK…VDNVCGEQQH (193 aa)). Cysteine 275 serves as the catalytic Nucleophile; for GATase activity. L-glutamine is bound by residues glutamine 279, asparagine 317, glycine 319, and phenylalanine 320. Catalysis depends on for GATase activity residues histidine 361 and glutamate 363. A linker region spans residues 391 to 405 (PMNKSKIIDCPKGIN). The segment at 406–948 (KVLILGSGGL…TNDVNINEKS (543 aa)) is CPSase A. The segment at 406 to 1461 (KVLILGSGGL…MKGPMPIENV (1056 aa)) is CPSase (Carbamoyl-phosphate synthase). 11 residues coordinate ATP: arginine 526, arginine 566, glycine 572, glycine 573, lysine 603, glutamate 610, glycine 636, isoleucine 637, histidine 638, glutamine 679, and glutamate 693. 2 consecutive ATP-grasp domains span residues 530–722 (AEKL…KVAL) and 1069–1260 (SRLL…KIII). Mg(2+) contacts are provided by glutamine 679, glutamate 693, and asparagine 695. Mn(2+) contacts are provided by glutamine 679, glutamate 693, and asparagine 695. The tract at residues 949-1461 (YITLGSGSYR…MKGPMPIENV (513 aa)) is CPSase B. Residues arginine 1105, lysine 1144, isoleucine 1146, glutamate 1151, glycine 1176, valine 1177, histidine 1178, serine 1179, glutamine 1219, and glutamate 1231 each contribute to the ATP site. Residues glutamine 1219, glutamate 1231, and asparagine 1233 each contribute to the Mg(2+) site. Mn(2+) contacts are provided by glutamine 1219, glutamate 1231, and asparagine 1233. Residues 1324–1470 (FKAPEKNVLL…VDWRTSNKII (147 aa)) form the MGS-like domain. Positions 1463 to 1797 (WRTSNKIIRL…VRGKVVKVVL (335 aa)) are DHOase (dihydroorotase). 2 residues coordinate Zn(2+): histidine 1479 and histidine 1481. (S)-dihydroorotate is bound by residues arginine 1483 and asparagine 1513. Residues lysine 1564, histidine 1599, cysteine 1622, histidine 1623, and glutamate 1646 each coordinate Zn(2+). N6-carboxylysine is present on lysine 1564. (S)-dihydroorotate is bound at residue arginine 1670. Aspartate 1695 is a Zn(2+) binding site. Aspartate 1695 serves as the catalytic For DHOase activity. Positions 1699 and 1711 each coordinate (S)-dihydroorotate. The linker stretch occupies residues 1798–1916 (RGQIAFIDGK…DTLQTAFNIS (119 aa)). The interval 1917–2225 (DNSLAGKHIF…LLALVFGAGV (309 aa)) is ATCase (Aspartate transcarbamylase). Arginine 1974 and threonine 1975 together coordinate carbamoyl phosphate. Residue lysine 2002 participates in L-aspartate binding. The carbamoyl phosphate site is built by arginine 2023, histidine 2051, and glutamine 2054. The L-aspartate site is built by arginine 2084 and arginine 2145. Carbamoyl phosphate contacts are provided by leucine 2184 and proline 2185.

It in the N-terminal section; belongs to the CarA family. In the 2nd section; belongs to the CarB family. This sequence in the 3rd section; belongs to the metallo-dependent hydrolases superfamily. DHOase family. CAD subfamily. The protein in the C-terminal section; belongs to the aspartate/ornithine carbamoyltransferase superfamily. ATCase family. In terms of assembly, homohexamer. Mg(2+) is required as a cofactor. It depends on Mn(2+) as a cofactor. Zn(2+) serves as cofactor.

It is found in the cytoplasm. It catalyses the reaction hydrogencarbonate + L-glutamine + 2 ATP + H2O = carbamoyl phosphate + L-glutamate + 2 ADP + phosphate + 2 H(+). The enzyme catalyses L-glutamine + H2O = L-glutamate + NH4(+). It carries out the reaction hydrogencarbonate + NH4(+) + 2 ATP = carbamoyl phosphate + 2 ADP + phosphate + 2 H(+). The catalysed reaction is carbamoyl phosphate + L-aspartate = N-carbamoyl-L-aspartate + phosphate + H(+). It catalyses the reaction (S)-dihydroorotate + H2O = N-carbamoyl-L-aspartate + H(+). It functions in the pathway pyrimidine metabolism; UMP biosynthesis via de novo pathway; (S)-dihydroorotate from bicarbonate: step 1/3. Its pathway is pyrimidine metabolism; UMP biosynthesis via de novo pathway; (S)-dihydroorotate from bicarbonate: step 2/3. The protein operates within pyrimidine metabolism; UMP biosynthesis via de novo pathway; (S)-dihydroorotate from bicarbonate: step 3/3. Its activity is regulated as follows. Allosterically regulated and controlled by phosphorylation. 5-phosphoribose 1-diphosphate is an activator while UMP is an inhibitor of the CPSase reaction. In terms of biological role, multifunctional protein that encodes the first 3 enzymatic activities of the de novo pyrimidine pathway: carbamoylphosphate synthetase (CPSase; EC 6.3.5.5), aspartate transcarbamylase (ATCase; EC 2.1.3.2) and dihydroorotase (DHOase; EC 3.5.2.3). The CPSase-function is accomplished in 2 steps, by a glutamine-dependent amidotransferase activity (GATase) that binds and cleaves glutamine to produce ammonia, followed by an ammonium-dependent carbamoyl phosphate synthetase, which reacts with the ammonia, hydrogencarbonate and ATP to form carbamoyl phosphate. The endogenously produced carbamoyl phosphate is sequestered and channeled to the ATCase active site. ATCase then catalyzes the formation of carbamoyl-L-aspartate from L-aspartate and carbamoyl phosphate. In the last step, DHOase catalyzes the cyclization of carbamoyl aspartate to dihydroorotate. This chain is Multifunctional protein pyr1-3 (pyr1-3), found in Dictyostelium discoideum (Social amoeba).